The sequence spans 352 residues: Fructose-1,6-bisphosphatase class 1 (352 aa).

Mg(2+) contacts are provided by Glu111, Asp133, Ile135, and Asp136. Residues 136–139 (DGSS), Asn228, Tyr256, and Lys286 contribute to the substrate site. Glu292 is a Mg(2+) binding site.

It belongs to the FBPase class 1 family. As to quaternary structure, homotetramer. It depends on Mg(2+) as a cofactor.

Its subcellular location is the cytoplasm. The catalysed reaction is beta-D-fructose 1,6-bisphosphate + H2O = beta-D-fructose 6-phosphate + phosphate. It functions in the pathway carbohydrate biosynthesis; Calvin cycle. The protein is Fructose-1,6-bisphosphatase class 1 of Crocosphaera subtropica (strain ATCC 51142 / BH68) (Cyanothece sp. (strain ATCC 51142)).